The primary structure comprises 672 residues: UvrABC system protein B (672 aa).

The 156-residue stretch at 26 to 181 (AGLEDGLAYQ…ILQRLAELQY (156 aa)) folds into the Helicase ATP-binding domain. 39-46 (GVTGSGKT) serves as a coordination point for ATP. A Beta-hairpin motif is present at residues 92–115 (YYDYYQPEAYVPSSDTYIEKDASI). The Helicase C-terminal domain maps to 430 to 592 (QVDDLLSEIK…ITPKSIQKAV (163 aa)). The UVR domain maps to 631–666 (AKELRKLEEQMYHHARNLEFEEAAAVRDKIQHIRKG).

It belongs to the UvrB family. Forms a heterotetramer with UvrA during the search for lesions. Interacts with UvrC in an incision complex.

Its subcellular location is the cytoplasm. In terms of biological role, the UvrABC repair system catalyzes the recognition and processing of DNA lesions. A damage recognition complex composed of 2 UvrA and 2 UvrB subunits scans DNA for abnormalities. Upon binding of the UvrA(2)B(2) complex to a putative damaged site, the DNA wraps around one UvrB monomer. DNA wrap is dependent on ATP binding by UvrB and probably causes local melting of the DNA helix, facilitating insertion of UvrB beta-hairpin between the DNA strands. Then UvrB probes one DNA strand for the presence of a lesion. If a lesion is found the UvrA subunits dissociate and the UvrB-DNA preincision complex is formed. This complex is subsequently bound by UvrC and the second UvrB is released. If no lesion is found, the DNA wraps around the other UvrB subunit that will check the other stand for damage. This chain is UvrABC system protein B, found in Coxiella burnetii (strain CbuK_Q154) (Coxiella burnetii (strain Q154)).